The following is a 220-amino-acid chain: A-type ATP synthase subunit K (220 aa).

6 helical membrane-spanning segments follow: residues 5 to 25 (LILGAVGAGLAVGIAGLGSGI), 63 to 83 (FLVAILILFVFKTVSPWAMFA), 90 to 110 (LAGLSAIGQGIAASAGLGAVA), 125 to 145 (LPETQAIYGLLIAILLLVGVF), 155 to 175 (AALGAGFAVGFAGLSGIGQGI), and 195 to 215 (LVLAVMPETFAIFGLLIAILI).

Belongs to the V-ATPase proteolipid subunit family. In terms of assembly, the A-type ATPase is composed of subunits A(3), B(3), C, D, E(1 or 2), F, H(2), I and K(x). Subunit K dimerizes and may form higher oligomers.

It localises to the cell membrane. Functionally, component of the A-type ATP synthase that produces ATP from ADP in the presence of a proton gradient across the membrane. The polypeptide is A-type ATP synthase subunit K (Methanocaldococcus jannaschii (strain ATCC 43067 / DSM 2661 / JAL-1 / JCM 10045 / NBRC 100440) (Methanococcus jannaschii)).